The following is a 325-amino-acid chain: ATP synthase subunit gamma, mitochondrial (325 aa).

The transit peptide at 1–42 directs the protein to the mitochondrion; that stretch reads MAMAVFRREGRRLLPSIAARPIAAIRSPLSSDQEEGLLGVRS.

The protein belongs to the ATPase gamma chain family. F-type ATPases have 2 components, CF(1) - the catalytic core - and CF(0) - the membrane proton channel. CF(1) has five subunits: alpha(3), beta(3), gamma(1), delta(1), epsilon(1). CF(0) has three main subunits: a, b and c.

It localises to the mitochondrion. Its subcellular location is the mitochondrion inner membrane. Functionally, mitochondrial membrane ATP synthase (F(1)F(0) ATP synthase or Complex V) produces ATP from ADP in the presence of a proton gradient across the membrane which is generated by electron transport complexes of the respiratory chain. F-type ATPases consist of two structural domains, F(1) - containing the extramembraneous catalytic core, and F(0) - containing the membrane proton channel, linked together by a central stalk and a peripheral stalk. During catalysis, ATP synthesis in the catalytic domain of F(1) is coupled via a rotary mechanism of the central stalk subunits to proton translocation. Part of the complex F(1) domain and the central stalk which is part of the complex rotary element. The gamma subunit protrudes into the catalytic domain formed of alpha(3)beta(3). Rotation of the central stalk against the surrounding alpha(3)beta(3) subunits leads to hydrolysis of ATP in three separate catalytic sites on the beta subunits. This Arabidopsis thaliana (Mouse-ear cress) protein is ATP synthase subunit gamma, mitochondrial (ATPC).